Reading from the N-terminus, the 638-residue chain is Cytoplasmic dynein 1 intermediate chain 2 (638 aa).

Basic and acidic residues-rich tracts occupy residues 1–13 and 20–43; these read MSDK…ELER and QIRE…KKEA. Disordered stretches follow at residues 1 to 135 and 155 to 214; these read MSDK…GRGP and TYTK…EEKQ. Position 2 is an N-acetylserine (serine 2). Serine 51 bears the Diphosphoserine mark. A phosphoserine mark is found at serine 51, serine 73, tryptophan 81, proline 84, and serine 90. The segment covering 88 to 97 has biased composition (low complexity); that stretch reads PSSKSVSTPS. Threonine 95 is subject to Phosphothreonine. Serine 97, serine 101, and serine 104 each carry phosphoserine. The span at 190–214 shows a compositional bias: basic and acidic residues; it reads EKTLKKDEENDSKAPPHELTEEEKQ. WD repeat units lie at residues 277–326, 330–370, 379–420, 429–469, 474–519, 522–562, and 568–607; these read SKHR…TTPE, HCQS…RTPV, AHTH…HPQD, SKAV…AGIS, GHQG…PLYS, DNAD…EVPT, and EGNP…AVPR.

The protein belongs to the dynein intermediate chain family. In terms of assembly, homodimer. The cytoplasmic dynein 1 complex consists of two catalytic heavy chains (HCs) and a number of non-catalytic subunits presented by intermediate chains (ICs), light intermediate chains (LICs) and light chains (LCs); the composition seems to vary in respect to the IC, LIC and LC composition. The heavy chain homodimer serves as a scaffold for the probable homodimeric assembly of the respective non-catalytic subunits. The ICs and LICs bind directly to the HC dimer and the LCs assemble on the IC dimer. Interacts with DYNLT3. Interacts with DYNLT1. Interacts (dephosphorylated at Ser-90) with DCTN1. Interacts with BICD2. Interacts with SPEF2. Interacts with CFAP61. As to quaternary structure, (Microbial infection) Interacts with human adenovirus 5 hexon protein; this interaction probably allows virus intracellular transport. Post-translationally, the phosphorylation status of Ser-90 appears to be involved in dynactin-dependent target binding. In terms of processing, pyrophosphorylation by 5-diphosphoinositol pentakisphosphate (5-IP7) promotes interaction with DCTN1. Serine pyrophosphorylation is achieved by Mg(2+)-dependent, but enzyme independent transfer of a beta-phosphate from a inositol pyrophosphate to a pre-phosphorylated serine residue.

The protein resides in the cytoplasm. The protein localises to the cytoskeleton. In terms of biological role, acts as one of several non-catalytic accessory components of the cytoplasmic dynein 1 complex that are thought to be involved in linking dynein to cargos and to adapter proteins that regulate dynein function. Cytoplasmic dynein 1 acts as a motor for the intracellular retrograde motility of vesicles and organelles along microtubules. The intermediate chains mediate the binding of dynein to dynactin via its 150 kDa component (p150-glued) DCTN1. Involved in membrane-transport, such as Golgi apparatus, late endosomes and lysosomes. This chain is Cytoplasmic dynein 1 intermediate chain 2, found in Homo sapiens (Human).